The chain runs to 436 residues: GTPase Der (436 aa).

2 consecutive EngA-type G domains span residues 4–167 (PVVA…PKVE) and 176–351 (IRFC…ESHN). Residues 10–17 (GRPNVGKS), 57–61 (DTGGI), 119–122 (NKVD), 182–189 (GRPNVGKS), 229–233 (DTAGM), and 294–297 (NKWD) each bind GTP. Residues 352–436 (IRVQTNVLND…PIRIIARARD (85 aa)) form the KH-like domain.

Belongs to the TRAFAC class TrmE-Era-EngA-EngB-Septin-like GTPase superfamily. EngA (Der) GTPase family. In terms of assembly, associates with the 50S ribosomal subunit.

In terms of biological role, GTPase that plays an essential role in the late steps of ribosome biogenesis. This Bacillus cytotoxicus (strain DSM 22905 / CIP 110041 / 391-98 / NVH 391-98) protein is GTPase Der.